Here is a 327-residue protein sequence, read N- to C-terminus: Selenate reductase subunit beta (327 aa).

4Fe-4S ferredoxin-type domains follow at residues 6–35 (LAYV…RDGR), 124–155 (NHYF…KREE), and 157–186 (GLVV…FNLQ). [4Fe-4S] cluster contacts are provided by Cys-15, Cys-18, Cys-21, Cys-25, Cys-133, Cys-136, and Cys-141. 3 residues coordinate [3Fe-4S] cluster: Cys-145, Cys-166, and Cys-172. 5 residues coordinate [4Fe-4S] cluster: Cys-176, Cys-193, Cys-196, Cys-208, and Cys-212.

As to quaternary structure, heterotrimer of alpha (SerA), beta (SerB) and gamma (SerC) subunits. Requires [3Fe-4S] cluster as cofactor. [4Fe-4S] cluster is required as a cofactor.

The protein localises to the periplasm. The catalysed reaction is selenite + 2 Fe(III)-[cytochrome c] + H2O = 2 Fe(II)-[cytochrome] + selenate + 2 H(+). Enzyme isolated from cells grown in a tungstate rich environment shows a 20-fold reduction in selenate reductase activity. Component of the selenate reductase, which catalyzes the reduction of selenate to selenite and allows anaerobic growth with selenate as the sole terminal electron acceptor. A c-type di-heme cytochrome of the cytc4 family was shown to donate electrons to the selenate reductase in vitro. SerABC can also use reduced benzyl viologen or reduced methyl viologen as an electron donor. This subunit transfers electrons from SerC to SerA. The reductase is specific for selenate, and cannot reduce nitrate, nitrite, chlorate or sulfate. In Thauera selenatis, this protein is Selenate reductase subunit beta.